The chain runs to 300 residues: NAD kinase (300 aa).

Aspartate 75 serves as the catalytic Proton acceptor. NAD(+) is bound by residues 75 to 76 (DG), 149 to 150 (ND), arginine 177, aspartate 179, 190 to 195 (TAYALS), alanine 214, and glutamine 248.

The protein belongs to the NAD kinase family. A divalent metal cation is required as a cofactor.

The protein resides in the cytoplasm. It catalyses the reaction NAD(+) + ATP = ADP + NADP(+) + H(+). In terms of biological role, involved in the regulation of the intracellular balance of NAD and NADP, and is a key enzyme in the biosynthesis of NADP. Catalyzes specifically the phosphorylation on 2'-hydroxyl of the adenosine moiety of NAD to yield NADP. The protein is NAD kinase of Burkholderia cenocepacia (strain HI2424).